A 232-amino-acid chain; its full sequence is 2,3,4,5-tetrahydropyridine-2,6-dicarboxylate N-acetyltransferase (232 aa).

Belongs to the transferase hexapeptide repeat family. DapH subfamily.

It carries out the reaction (S)-2,3,4,5-tetrahydrodipicolinate + acetyl-CoA + H2O = L-2-acetamido-6-oxoheptanedioate + CoA. It functions in the pathway amino-acid biosynthesis; L-lysine biosynthesis via DAP pathway; LL-2,6-diaminopimelate from (S)-tetrahydrodipicolinate (acetylase route): step 1/3. Its function is as follows. Catalyzes the transfer of an acetyl group from acetyl-CoA to tetrahydrodipicolinate. The sequence is that of 2,3,4,5-tetrahydropyridine-2,6-dicarboxylate N-acetyltransferase from Streptococcus thermophilus (strain CNRZ 1066).